Consider the following 214-residue polypeptide: Thymidylate kinase (214 aa).

11 to 18 (GPEGAGKT) lines the ATP pocket.

It belongs to the thymidylate kinase family.

It catalyses the reaction dTMP + ATP = dTDP + ADP. Phosphorylation of dTMP to form dTDP in both de novo and salvage pathways of dTTP synthesis. This chain is Thymidylate kinase, found in Leuconostoc citreum (strain KM20).